A 512-amino-acid polypeptide reads, in one-letter code: 3-ketoacyl-CoA synthase 9 (512 aa).

A run of 2 helical transmembrane segments spans residues 44–64 (LITH…VTEI) and 83–103 (LVAF…YIMS). Residues 100 to 389 (YIMSRPRSVY…FFMTLVTKKL (290 aa)) form the FAE domain. Active-site residues include cysteine 244, histidine 323, histidine 407, histidine 411, histidine 440, and asparagine 444.

The protein belongs to the thiolase-like superfamily. Chalcone/stilbene synthases family. As to expression, expressed in seedlings, stems, leaves, flowers and siliques. Expressed in roots, leaves, and stems, including epidermis, silique walls, sepals, the upper portion of the styles, and seed coats, but not in developing embryos.

It localises to the endoplasmic reticulum membrane. It catalyses the reaction a very-long-chain acyl-CoA + malonyl-CoA + H(+) = a very-long-chain 3-oxoacyl-CoA + CO2 + CoA. Its pathway is lipid metabolism; fatty acid biosynthesis. Involved in the elongation of C22 to C24 fatty acids, which are precursors for the biosynthesis of cuticular waxes, aliphatic suberins, and membrane lipids, including sphingolipids and phospholipids. The chain is 3-ketoacyl-CoA synthase 9 from Arabidopsis thaliana (Mouse-ear cress).